The following is a 344-amino-acid chain: uncharacterized protein (344 aa).

8 consecutive transmembrane segments (helical) span residues 25–45, 68–88, 104–124, 133–153, 161–181, 224–244, 276–296, and 302–322; these read GAGW…VGAV, FVDA…ADGV, GVVP…GWNC, SACA…GVGA, GVGT…LAVV, LGAF…DAAL, VFAL…PAAL, and LVTA…LAGV.

It belongs to the peptidase S58 family.

The protein localises to the cell membrane. In terms of biological role, aminopeptidase. This is an uncharacterized protein from Mycobacterium bovis (strain ATCC BAA-935 / AF2122/97).